Here is a 274-residue protein sequence, read N- to C-terminus: Large ribosomal subunit protein uL2 (274 aa).

2 disordered regions span residues 28–54 and 224–274; these read APHAPLLEKKSKTGGRNNNGRITTRHI and VAMN…RRRK. Positions 263–274 are enriched in basic and acidic residues; the sequence is KRTDKMIVRRRK.

This sequence belongs to the universal ribosomal protein uL2 family. As to quaternary structure, part of the 50S ribosomal subunit. Forms a bridge to the 30S subunit in the 70S ribosome.

One of the primary rRNA binding proteins. Required for association of the 30S and 50S subunits to form the 70S ribosome, for tRNA binding and peptide bond formation. It has been suggested to have peptidyltransferase activity; this is somewhat controversial. Makes several contacts with the 16S rRNA in the 70S ribosome. In Pseudomonas fluorescens (strain SBW25), this protein is Large ribosomal subunit protein uL2.